The sequence spans 539 residues: uncharacterized protein (539 aa).

5 consecutive transmembrane segments (helical) span residues 4 to 22 (LVENQLLALVVIMTVGLLL), 27 to 46 (IFGFRLGVAAVLFVGLALST), 56 to 78 (LIYVVGLSLFVYTIGLEAGPGFF), 90 to 112 (ALTLGAIIATTALAWALITVLNI), and 155 to 177 (PVVAYSLAYPLGVLIVILSIAIF). RCK C-terminal domains lie at 187–269 (KEAE…AIGE) and 271–352 (IDGD…LLGD). 4 helical membrane-spanning segments follow: residues 360-382 (FNLLPLAAGLMIGVLVGMVEFPL), 422-444 (LALRQLGITLFLAAIGTSAGAGF), 453-475 (SLTIIGFGALLTLFISITVLFVG), and 516-538 (YTSVYPLAMIAKILAAQTLLFLL).

Belongs to the AAE transporter (TC 2.A.81) family.

It localises to the cell membrane. This is an uncharacterized protein from Corynebacterium glutamicum (strain ATCC 13032 / DSM 20300 / JCM 1318 / BCRC 11384 / CCUG 27702 / LMG 3730 / NBRC 12168 / NCIMB 10025 / NRRL B-2784 / 534).